Consider the following 271-residue polypeptide: Thiazole synthase (271 aa).

K108 functions as the Schiff-base intermediate with DXP in the catalytic mechanism. 1-deoxy-D-xylulose 5-phosphate-binding positions include G169, 195–196 (AG), and 217–218 (NS).

Belongs to the ThiG family. As to quaternary structure, homotetramer. Forms heterodimers with either ThiH or ThiS.

The protein resides in the cytoplasm. It catalyses the reaction [ThiS sulfur-carrier protein]-C-terminal-Gly-aminoethanethioate + 2-iminoacetate + 1-deoxy-D-xylulose 5-phosphate = [ThiS sulfur-carrier protein]-C-terminal Gly-Gly + 2-[(2R,5Z)-2-carboxy-4-methylthiazol-5(2H)-ylidene]ethyl phosphate + 2 H2O + H(+). Its pathway is cofactor biosynthesis; thiamine diphosphate biosynthesis. Its function is as follows. Catalyzes the rearrangement of 1-deoxy-D-xylulose 5-phosphate (DXP) to produce the thiazole phosphate moiety of thiamine. Sulfur is provided by the thiocarboxylate moiety of the carrier protein ThiS. In vitro, sulfur can be provided by H(2)S. The sequence is that of Thiazole synthase from Prochlorococcus marinus (strain SARG / CCMP1375 / SS120).